Here is a 56-residue protein sequence, read N- to C-terminus: Large ribosomal subunit protein bL32 (56 aa).

The protein belongs to the bacterial ribosomal protein bL32 family.

The chain is Large ribosomal subunit protein bL32 from Edwardsiella ictaluri (strain 93-146).